The primary structure comprises 264 residues: Small ribosomal subunit protein eS1 (264 aa).

Residues 232–264 (HGEGGGSGKPSGDETGAKVERADGYEPPVQESV) are disordered. Basic and acidic residues predominate over residues 242–255 (SGDETGAKVERADG).

Belongs to the eukaryotic ribosomal protein eS1 family. Component of the small ribosomal subunit. Mature ribosomes consist of a small (40S) and a large (60S) subunit. The 40S subunit contains about 33 different proteins and 1 molecule of RNA (18S). The 60S subunit contains about 49 different proteins and 3 molecules of RNA (28S, 5.8S and 5S). Part of the small subunit (SSU) processome, composed of more than 70 proteins and the RNA chaperone small nucleolar RNA (snoRNA) U3.

It localises to the cytoplasm. It is found in the nucleus. The protein localises to the nucleolus. Its function is as follows. Component of the small ribosomal subunit. The ribosome is a large ribonucleoprotein complex responsible for the synthesis of proteins in the cell. Part of the small subunit (SSU) processome, first precursor of the small eukaryotic ribosomal subunit. During the assembly of the SSU processome in the nucleolus, many ribosome biogenesis factors, an RNA chaperone and ribosomal proteins associate with the nascent pre-rRNA and work in concert to generate RNA folding, modifications, rearrangements and cleavage as well as targeted degradation of pre-ribosomal RNA by the RNA exosome. May play a role during erythropoiesis. In Ophiophagus hannah (King cobra), this protein is Small ribosomal subunit protein eS1.